The primary structure comprises 370 residues: Protein-glutamate methylesterase/protein-glutamine glutaminase 3 (370 aa).

A Response regulatory domain is found at 3–119; sequence KVLIVDDSAL…SLNVSRIERE (117 aa). 4-aspartylphosphate is present on Asp53. Positions 166 to 360 constitute a CheB-type methylesterase domain; it reads SLTEIGVVLI…GQLNAWMSRT (195 aa). Catalysis depends on residues Ser178, His205, and Asp302.

Belongs to the CheB family. Post-translationally, phosphorylated by CheA. Phosphorylation of the N-terminal regulatory domain activates the methylesterase activity.

The protein resides in the cytoplasm. The enzyme catalyses [protein]-L-glutamate 5-O-methyl ester + H2O = L-glutamyl-[protein] + methanol + H(+). It carries out the reaction L-glutaminyl-[protein] + H2O = L-glutamyl-[protein] + NH4(+). Involved in chemotaxis. Part of a chemotaxis signal transduction system that modulates chemotaxis in response to various stimuli. Catalyzes the demethylation of specific methylglutamate residues introduced into the chemoreceptors (methyl-accepting chemotaxis proteins or MCP) by CheR. Also mediates the irreversible deamidation of specific glutamine residues to glutamic acid. The sequence is that of Protein-glutamate methylesterase/protein-glutamine glutaminase 3 from Rhodospirillum rubrum (strain ATCC 11170 / ATH 1.1.1 / DSM 467 / LMG 4362 / NCIMB 8255 / S1).